The sequence spans 166 residues: Flagellar assembly factor FliW (166 aa).

This sequence belongs to the FliW family. Interacts with translational regulator CsrA and flagellin(s).

The protein localises to the cytoplasm. Acts as an anti-CsrA protein, binds CsrA and prevents it from repressing translation of its target genes, one of which is flagellin. Binds to flagellin and participates in the assembly of the flagellum. The polypeptide is Flagellar assembly factor FliW (Desulfovibrio desulfuricans (strain ATCC 27774 / DSM 6949 / MB)).